The chain runs to 97 residues: Small ribosomal subunit protein bS18c (97 aa).

This sequence belongs to the bacterial ribosomal protein bS18 family. In terms of assembly, part of the 30S ribosomal subunit.

Its subcellular location is the plastid. It is found in the chloroplast. The chain is Small ribosomal subunit protein bS18c from Oenothera glazioviana (Large-flowered evening primrose).